Reading from the N-terminus, the 502-residue chain is Probable cytosol aminopeptidase (502 aa).

Mn(2+) is bound by residues Lys275 and Asp280. The active site involves Lys287. 3 residues coordinate Mn(2+): Asp298, Asp357, and Glu359. Arg361 is a catalytic residue.

It belongs to the peptidase M17 family. Mn(2+) serves as cofactor.

It is found in the cytoplasm. The catalysed reaction is Release of an N-terminal amino acid, Xaa-|-Yaa-, in which Xaa is preferably Leu, but may be other amino acids including Pro although not Arg or Lys, and Yaa may be Pro. Amino acid amides and methyl esters are also readily hydrolyzed, but rates on arylamides are exceedingly low.. It catalyses the reaction Release of an N-terminal amino acid, preferentially leucine, but not glutamic or aspartic acids.. Its function is as follows. Presumably involved in the processing and regular turnover of intracellular proteins. Catalyzes the removal of unsubstituted N-terminal amino acids from various peptides. The polypeptide is Probable cytosol aminopeptidase (Ralstonia pickettii (strain 12J)).